Consider the following 72-residue polypeptide: Gene 79 protein (72 aa).

This chain is Gene 79 protein (79), found in Mycobacterium (Mycobacteriophage L5).